We begin with the raw amino-acid sequence, 807 residues long: MKFSESWLREWVNPALSSDDLAHQITMAGLEVDGVDPVAGEFSGVVIGEVVECGPHPDADKLQVTKISLGDYSSTTVEKGELVTIVCGAKNCRLGLKVAVATVGAVLPGDFKIKKAKLRGVPSFGMLCSESEIGLADDSDGIMELASDAPLGQCVREYLDLNDVTIDVDLTANRGDCLGLKGLAREVGVLNSLEVSEPTITAVAPTIDDVITINIEANEACPRYLGRVIKGINPNATTPLWMVEKLRRCGTRSIDPVVDVTNYILLELGHPMHAFDLAKLDGGINVRFANKDEKLTLLDENEVTLKEGTLVIADENKALAMAGIFGGLESGVTNNTTDLFLESAFFAPLAILGKARQYGLHTDSSHRYERGIDPTLQHDAIERATELLLSIVGGQAGPVVEAKSDADIPQTKDVNLRRKMLDSRIGHHIEDAQVSEILTRLGFTVTTTGEGEAKVWQVIVPAYRFDIKIEVDLIEEVARIFGYNNIPNIAPKATLKMCEQKEANLSLSNLKQTLVNRDYQEAITYSFVDPKVQALLHPGQEVMTLPHPISSEMSVMRLSLWTGLLQSMVYNQNRQQGRIRLFETGLRFVPDESAENGVRQQNMIAGVISGLRVDEHWSMEKAATDFYDIKGDVEALLALTCDAQGYEFSKAEVDALHPGQTAQITKNGVFVGCVGTLHPELERKLGLNGRTLIFELLLSEVLVQKIPEATDISRFPANRRDLAIVVKEDVDAKNVLQLIEKVGGNYLIDLNLFDVYKGQGIDDGFKSLAIALVLQDTSKTLEEKDITDVIDRVVATLKTELNASLRD.

One can recognise a tRNA-binding domain in the interval 39–156; that stretch reads AGEFSGVVIG…SDAPLGQCVR (118 aa). Positions 409 to 488 constitute a B5 domain; it reads PQTKDVNLRR…RIFGYNNIPN (80 aa). Asp466, Asp472, Glu475, and Glu476 together coordinate Mg(2+). An FDX-ACB domain is found at 713-806; the sequence is SRFPANRRDL…LKTELNASLR (94 aa).

It belongs to the phenylalanyl-tRNA synthetase beta subunit family. Type 1 subfamily. Tetramer of two alpha and two beta subunits. Mg(2+) is required as a cofactor.

The protein localises to the cytoplasm. It carries out the reaction tRNA(Phe) + L-phenylalanine + ATP = L-phenylalanyl-tRNA(Phe) + AMP + diphosphate + H(+). This is Phenylalanine--tRNA ligase beta subunit from Colwellia psychrerythraea (strain 34H / ATCC BAA-681) (Vibrio psychroerythus).